A 242-amino-acid polypeptide reads, in one-letter code: Small ribosomal subunit protein uS3 (242 aa).

One can recognise a KH type-2 domain in the interval 39–110 (IRRFIHKKYG…QVRINVVEVE (72 aa)). The disordered stretch occupies residues 217–242 (TMPVGASPRRRGNRRPQQFEDRSNEG). The segment covering 233-242 (QQFEDRSNEG) has biased composition (basic and acidic residues).

It belongs to the universal ribosomal protein uS3 family. In terms of assembly, part of the 30S ribosomal subunit. Forms a tight complex with proteins S10 and S14.

Binds the lower part of the 30S subunit head. Binds mRNA in the 70S ribosome, positioning it for translation. This Prochlorococcus marinus (strain MIT 9313) protein is Small ribosomal subunit protein uS3.